A 374-amino-acid polypeptide reads, in one-letter code: Aminomethyltransferase (374 aa).

It belongs to the GcvT family. The glycine cleavage system is composed of four proteins: P, T, L and H.

The catalysed reaction is N(6)-[(R)-S(8)-aminomethyldihydrolipoyl]-L-lysyl-[protein] + (6S)-5,6,7,8-tetrahydrofolate = N(6)-[(R)-dihydrolipoyl]-L-lysyl-[protein] + (6R)-5,10-methylene-5,6,7,8-tetrahydrofolate + NH4(+). The glycine cleavage system catalyzes the degradation of glycine. The sequence is that of Aminomethyltransferase from Edwardsiella ictaluri (strain 93-146).